The following is an 838-amino-acid chain: Probable inorganic carbon transporter subunit DabA (838 aa).

4 residues coordinate Zn(2+): cysteine 353, aspartate 355, histidine 537, and cysteine 552.

Belongs to the inorganic carbon transporter (TC 9.A.2) DabA family. In terms of assembly, forms a complex with DabB. It depends on Zn(2+) as a cofactor.

The protein resides in the cell membrane. Part of an energy-coupled inorganic carbon pump. This chain is Probable inorganic carbon transporter subunit DabA, found in Roseiflexus sp. (strain RS-1).